The sequence spans 428 residues: MKTSLFKSLYFQVLTAIAIGILLGHYYPELGAQMKPLGDAFVKLIKMIIAPVIFCTVVTGIAGMESMKAVGRTGAVALLYFEIVSTIALIIGLIIVNVVQPGAGMNVDPATLDAQAVAVYAAQAKEQGIIAFLMDIIPGSVIGAFASGNILQVLLFAVLFGFALHRLGSKGQLIFNVIESFSQVIFGIINMIMRLAPIGAFGAMAFTIGKYGVGSLVQLGQLIICFYITCILFVVVVLGTIARVTGFSIFKFIRYIREELLIVLGTSSSESALPRMLDKMEKLGCRKSVVGLVIPTGYSFNLDGTSIYLTMAAVFIAQATNSHMDIFHQITLLVVLLLSSKGAAGVTGSGFIVLAATISAVGHLPVAGLALILGIDRFMSEARALTNLVGNGVATVVVAKWVKELDRQKLDDVLNNRAPDGKTHEISS.

Helical transmembrane passes span 4-24, 44-64, 76-96, 142-162, 184-204, 222-242, 289-309, 326-346, and 352-372; these read SLFK…ILLG, LIKM…IAGM, VALL…LIIV, IGAF…LFGF, VIFG…FGAM, LIIC…GTIA, VVGL…SIYL, IFHQ…AAGV, and IVLA…LALI.

This sequence belongs to the dicarboxylate/amino acid:cation symporter (DAACS) (TC 2.A.23) family.

The protein resides in the cell inner membrane. Functionally, responsible for the transport of dicarboxylates such as succinate, fumarate, and malate from the periplasm across the membrane. The sequence is that of C4-dicarboxylate transport protein from Salmonella arizonae (strain ATCC BAA-731 / CDC346-86 / RSK2980).